A 188-amino-acid chain; its full sequence is UPF0301 protein azo3459 (188 aa).

Belongs to the UPF0301 (AlgH) family.

In Azoarcus sp. (strain BH72), this protein is UPF0301 protein azo3459.